Consider the following 132-residue polypeptide: UPF0332 protein TM_1000 (132 aa).

It belongs to the UPF0332 family.

The chain is UPF0332 protein TM_1000 from Thermotoga maritima (strain ATCC 43589 / DSM 3109 / JCM 10099 / NBRC 100826 / MSB8).